The following is a 942-amino-acid chain: Leucine--tRNA ligase 1 (942 aa).

The 'HIGH' region signature appears at 39-49 (PYTNSPLHIGH). The short motif at 624–628 (KMSKS) is the 'KMSKS' region element. ATP is bound at residue Lys627.

Belongs to the class-I aminoacyl-tRNA synthetase family.

Its subcellular location is the cytoplasm. It carries out the reaction tRNA(Leu) + L-leucine + ATP = L-leucyl-tRNA(Leu) + AMP + diphosphate. The chain is Leucine--tRNA ligase 1 from Sulfolobus acidocaldarius (strain ATCC 33909 / DSM 639 / JCM 8929 / NBRC 15157 / NCIMB 11770).